A 162-amino-acid polypeptide reads, in one-letter code: Tegument protein BLRF2 (162 aa).

Residues 12 to 43 (VKAVDMSMEDMAARLARLESENKALKQQVLRG) adopt a coiled-coil conformation. Residues 118 to 162 (SMLGAKGQPSPGEGTRPRESNDPNATRRARSRSRGREAKKVQISD) form a disordered region. A compositionally biased stretch (basic and acidic residues) spans 151-162 (RGREAKKVQISD).

The protein belongs to the herpesviridae BLRF2 family. As to quaternary structure, homooligomer; homooligomerizes and binds double-stranded DNA (dsDNA) cooperatively. Interacts with host CGAS.

It localises to the virion tegument. The protein resides in the host cytoplasm. Plays a role in the inhibition of host innate immune system by targeting the CGAS enzymatic activity which is the principal cytosolic DNA sensor that detects invading viral DNA. Acts by inhibiting CGAS-DNA phase separation: directly binds double-stranded DNA (dsDNA) in a length dependent but sequence independent manner and is able to form DNA-induced phase separation in infected cells. DNA phase separation of ORF52 mediates disruption of liquid-like droplets in which CGAS is activated, thereby preventing CGAS activity. This Homo sapiens (Human) protein is Tegument protein BLRF2.